The chain runs to 238 residues: Probable rhamnogalacturonate lyase B (238 aa).

The signal sequence occupies residues Met1–Ala19. Residues Asn27, Asn110, and Asn143 are each glycosylated (N-linked (GlcNAc...) asparagine).

This sequence belongs to the polysaccharide lyase 4 family.

It localises to the secreted. The catalysed reaction is Endotype eliminative cleavage of L-alpha-rhamnopyranosyl-(1-&gt;4)-alpha-D-galactopyranosyluronic acid bonds of rhamnogalacturonan I domains in ramified hairy regions of pectin leaving L-rhamnopyranose at the reducing end and 4-deoxy-4,5-unsaturated D-galactopyranosyluronic acid at the non-reducing end.. Its function is as follows. Pectinolytic enzymes consist of four classes of enzymes: pectin lyase, polygalacturonase, pectin methylesterase and rhamnogalacturonase. Degrades the rhamnogalacturonan I (RG-I) backbone of pectin. The sequence is that of Probable rhamnogalacturonate lyase B (rglB) from Aspergillus oryzae (strain ATCC 42149 / RIB 40) (Yellow koji mold).